The primary structure comprises 166 residues: Regulator of ribonuclease activity A (166 aa).

It belongs to the RraA family. As to quaternary structure, homotrimer. Binds to both RNA-binding sites in the C-terminal region of Rne and to RhlB.

It localises to the cytoplasm. In terms of biological role, globally modulates RNA abundance by binding to RNase E (Rne) and regulating its endonucleolytic activity. Can modulate Rne action in a substrate-dependent manner by altering the composition of the degradosome. Modulates RNA-binding and helicase activities of the degradosome. In Actinobacillus succinogenes (strain ATCC 55618 / DSM 22257 / CCUG 43843 / 130Z), this protein is Regulator of ribonuclease activity A.